A 277-amino-acid chain; its full sequence is Homeobox protein Nkx-6.2 (277 aa).

Residues 89 to 142 form a repressor domain region; sequence AGVYFGPAAAVARGYPKPLAELPGRPPIFWPGVVQGAPWRDPRLAGPAPAGGVL. 2 disordered regions span residues 132–155 and 210–250; these read LAGP…RPTF and EMAS…DDEK. Positions 148–207 form a DNA-binding region, homeobox; that stretch reads KKHSRPTFSGQQIFALEKTFEQTKYLAGPERARLAYSLGMTESQVKVWFQNRRTKWRKRH. Basic and acidic residues predominate over residues 216–226; that stretch reads KKQDSDAEKLK.

Highest expression in brain.

The protein resides in the nucleus. Transcription factor with repressor activity involved in the regulation of axon-glial interactions at myelin paranodes in oligodendrocytes. Binds to the consensus DNA sequence 5'-(A/T)TTAATGA-3'. In oligodendrocytes, binds to MBP and PLP1 promoter regions. In Homo sapiens (Human), this protein is Homeobox protein Nkx-6.2 (NKX6-2).